The following is a 224-amino-acid chain: Pyridoxine/pyridoxamine 5'-phosphate oxidase (224 aa).

Residues 14 to 17 and Lys76 contribute to the substrate site; that span reads REHY. Residues 71-76, 86-87, Arg92, Lys93, and Gln115 each bind FMN; these read RTVLMK and YT. Residues Tyr133, Arg137, and Ser141 each contribute to the substrate site. Residues 150-151 and Trp196 contribute to the FMN site; that span reads QS. 202 to 204 contributes to the substrate binding site; the sequence is RLH. Residue Arg206 participates in FMN binding.

This sequence belongs to the pyridoxamine 5'-phosphate oxidase family. Homodimer. It depends on FMN as a cofactor.

The enzyme catalyses pyridoxamine 5'-phosphate + O2 + H2O = pyridoxal 5'-phosphate + H2O2 + NH4(+). It carries out the reaction pyridoxine 5'-phosphate + O2 = pyridoxal 5'-phosphate + H2O2. Its pathway is cofactor metabolism; pyridoxal 5'-phosphate salvage; pyridoxal 5'-phosphate from pyridoxamine 5'-phosphate: step 1/1. It functions in the pathway cofactor metabolism; pyridoxal 5'-phosphate salvage; pyridoxal 5'-phosphate from pyridoxine 5'-phosphate: step 1/1. Catalyzes the oxidation of either pyridoxine 5'-phosphate (PNP) or pyridoxamine 5'-phosphate (PMP) into pyridoxal 5'-phosphate (PLP). The sequence is that of Pyridoxine/pyridoxamine 5'-phosphate oxidase from Streptomyces avermitilis (strain ATCC 31267 / DSM 46492 / JCM 5070 / NBRC 14893 / NCIMB 12804 / NRRL 8165 / MA-4680).